The primary structure comprises 314 residues: MTTLLIAEHDNASLKDATNKALTAAAALGADVEVLVAGEGAKAAADAAAKLAGVKKVLLADGALYAHDLAEPLAALIVSLAPSYDAIVAPATSRFKNVMPRVAALLDVMQVSEIIKVVAPDTYERPIYAGNAIQTVKSKDAKKVITVRTSTFAAAGEGGSAPVESVQAAADPGLSSFVGEEVAKSDRPELTSAKIIVSGGRAMQSRENFAKYIEPLADKLGAGVGASRAAVDAGYAPNDWQVGQTGKVVAPELYVAVGISGAIQHLAGMKDSKVIVAINKDEDAPIFQVADYGLVADLYQAVPELTAELGKLGK.

253-281 contributes to the FAD binding site; sequence LYVAVGISGAIQHLAGMKDSKVIVAINKD.

This sequence belongs to the ETF alpha-subunit/FixB family. In terms of assembly, heterodimer of an alpha and a beta subunit. Requires FAD as cofactor.

Its function is as follows. The electron transfer flavoprotein serves as a specific electron acceptor for other dehydrogenases. It transfers the electrons to the main respiratory chain via ETF-ubiquinone oxidoreductase (ETF dehydrogenase). This Bradyrhizobium diazoefficiens (strain JCM 10833 / BCRC 13528 / IAM 13628 / NBRC 14792 / USDA 110) protein is Electron transfer flavoprotein subunit alpha (etfA).